The sequence spans 71 residues: MPTVRVKENEPFEVALRRFKRSCEKAGVLTEVRRREFYEKPTEERKRKAAAARKRALKRMRRQSMRLVRLY.

This sequence belongs to the bacterial ribosomal protein bS21 family.

The polypeptide is Small ribosomal subunit protein bS21 (Acidithiobacillus ferrooxidans (strain ATCC 23270 / DSM 14882 / CIP 104768 / NCIMB 8455) (Ferrobacillus ferrooxidans (strain ATCC 23270))).